The chain runs to 347 residues: Phenylalanine--tRNA ligase alpha subunit (347 aa).

Glu261 contacts Mg(2+).

It belongs to the class-II aminoacyl-tRNA synthetase family. Phe-tRNA synthetase alpha subunit type 1 subfamily. In terms of assembly, tetramer of two alpha and two beta subunits. It depends on Mg(2+) as a cofactor.

The protein resides in the cytoplasm. The catalysed reaction is tRNA(Phe) + L-phenylalanine + ATP = L-phenylalanyl-tRNA(Phe) + AMP + diphosphate + H(+). The polypeptide is Phenylalanine--tRNA ligase alpha subunit (Streptococcus pyogenes serotype M18 (strain MGAS8232)).